Consider the following 1117-residue polypeptide: Endogenous retrovirus group K member 9 Pol protein (1117 aa).

G2 carries the N-myristoyl glycine lipid modification. The region spanning 58-195 (KDWKRIGKEL…AGQVPVTLQP (138 aa)) is the Reverse transcriptase domain. Positions 165 to 264 (GKGPELVGPS…APPSRQGSEL (100 aa)) are disordered. The segment covering 232–247 (GMPPAPQGRAPYPQPP) has biased composition (pro residues). CCHC-type zinc fingers lie at residues 544-561 (GKCY…NCPV) and 580-597 (DLCP…QCRS). Positions 598–629 (KFDKNGQPLSGNEQRGQPQAPQQTGAFPIQPF) are disordered. Positions 604–622 (QPLSGNEQRGQPQAPQQTG) are enriched in polar residues. Residues 800–875 (FEGLVDTGAD…IPLNLWGRDL (76 aa)) form the Peptidase A2 domain. Residue D805 is part of the active site. The G-patch domain occupies 890–936 (YSPTSQKIMTKRGYIPGKGLGKNEDGIKIPFEAKINQKREGIGYPFL).

Belongs to the beta type-B retroviral polymerase family. HERV class-II K(HML-2) pol subfamily. Myristoylation is essential for retroviral assembly. Alteration of the glycine residue leads to a block in the budding of particles and an accumulation of Gag inside the cell. In terms of processing, specific enzymatic cleavages may yield mature proteins.

Its subcellular location is the cell membrane. The catalysed reaction is Processing at the authentic HIV-1 PR recognition site and release of the mature p17 matrix and the p24 capsid protein, as a result of the cleavage of the -SQNY-|-PIVQ- cleavage site.. The enzyme catalyses DNA(n) + a 2'-deoxyribonucleoside 5'-triphosphate = DNA(n+1) + diphosphate. It carries out the reaction Endonucleolytic cleavage to 5'-phosphomonoester.. In terms of biological role, the products of the Gag polyproteins of infectious retroviruses perform highly complex orchestrated tasks during the assembly, budding, maturation, and infection stages of the viral replication cycle. During viral assembly, the proteins form membrane associations and self-associations that ultimately result in budding of an immature virion from the infected cell. Gag precursors also function during viral assembly to selectively bind and package two plus strands of genomic RNA. Endogenous Gag proteins may have kept, lost or modified their original function during evolution. Functionally, early post-infection, the reverse transcriptase converts the viral RNA genome into double-stranded viral DNA. The RNase H domain of the reverse transcriptase performs two functions. It degrades the RNA template and specifically removes the RNA primer from the RNA/DNA hybrid. Following nuclear import, the integrase catalyzes the insertion of the linear, double-stranded viral DNA into the host cell chromosome. Endogenous Pol proteins may have kept, lost or modified their original function during evolution. The sequence is that of Endogenous retrovirus group K member 9 Pol protein (ERVK-9) from Homo sapiens (Human).